Reading from the N-terminus, the 435-residue chain is Eukaryotic peptide chain release factor subunit 1-2 (435 aa).

Ala-2 bears the N-acetylalanine mark.

The protein belongs to the eukaryotic release factor 1 family. In terms of assembly, heterodimer of two subunits, one of which binds GTP. Interacts with OR.

It is found in the cytoplasm. Directs the termination of nascent peptide synthesis (translation) in response to the termination codons UAA, UAG and UGA. Modulates plant growth and development. The protein is Eukaryotic peptide chain release factor subunit 1-2 of Brassica oleracea var. botrytis (Cauliflower).